Reading from the N-terminus, the 1270-residue chain is Glycine betaine reductase ATRR (1270 aa).

An adenylation (A) domain region spans residues 14–418 (FTQQVRASPN…MIKLRGYSVV (405 aa)). The 78-residue stretch at 528–605 (KEDPIGIEDI…GHLDTVRAIR (78 aa)) folds into the Carrier domain. Ser-565 carries the post-translational modification O-(pantetheine 4'-phosphoryl)serine. The segment at 643-937 (KTVLLTGVTG…EPLSWDDWVA (295 aa)) is carboxylic acid reductase domain R1. The segment at 1026 to 1256 (PLSGKVAVVT…IYALRQPEHV (231 aa)) is aldehyde reductase domain R2.

Belongs to the NRP synthetase family.

The tetramethylammonium ion, which mimics the head group of glycine betaine, acts as a competitive inhibitor of ATRR A domain, whereas the potency decreased by three orders of magnitude with dimethylammonium. Choline is a mixed inhibitor for both glycine betaine reductase and aldehyde reductase activity but more potent in competition against glycine betaine in the first reduction step. Therefore, choline could act as a feedback inhibitor to regulate ATRR enzymatic activity. The lowered binding affinity of choline to R2 favors the release of choline after glycine betaine aldehyde reduction to avoid direct product inhibition. In terms of biological role, NRPS-like enzyme with an unusual domain architecture that converts back glycine betaine to choline via a 2-step reduction mechanism, and thereby can be an alternative source of choline. Permits direct reutilization of endogenously stored glycine betaine for on-demand biosynthesis of choline and choline derivatives, including phospholipid phosphatidylcholine (PC) which has an essential role in maintaining membrane integrity and functionality, or choline-O-sulfate, a mean for intracellular sulfate storage. Glycine betaine is activated by the adenylation (A) domain, and transferred to the thiolation (T) domain. Movement of the phosphopantetheine arm to the thioester reductase domain R1 then allows thioester reduction by NADPH of glycine betainoyl thioester to glycine betaine aldehyde, which is in turn reduced to choline by the aldehyde reductase domain R2. This chain is Glycine betaine reductase ATRR, found in Emericella nidulans (strain FGSC A4 / ATCC 38163 / CBS 112.46 / NRRL 194 / M139) (Aspergillus nidulans).